A 1803-amino-acid chain; its full sequence is 6-methylsalicylic acid synthase (1803 aa).

Positions methionine 1 to asparagine 40 are disordered. The span at serine 13–glycine 24 shows a compositional bias: low complexity. The Ketosynthase family 3 (KS3) domain maps to glutamine 44 to glutamate 470. Catalysis depends on for beta-ketoacyl synthase activity residues cysteine 216, histidine 351, and histidine 391. A Malonyl-CoA:ACP transacylase (MAT) domain is found at valine 581–alanine 894. The active-site For malonyltransferase activity is serine 667. The segment at histidine 940–asparagine 1058 is N-terminal hotdog fold. Positions histidine 940–serine 1218 constitute a PKS/mFAS DH domain. Histidine 972 serves as the catalytic Proton acceptor; for thioesterase activity. A C-terminal hotdog fold region spans residues alanine 1073 to serine 1218. The Proton donor; for thioesterase activity role is filled by aspartate 1129. Residues threonine 1141–serine 1262 form a required for homotetramer formation region. In terms of domain architecture, Ketoreductase (KR) spans serine 1434–arginine 1628. Low complexity predominate over residues alanine 1701–alanine 1710. The tract at residues alanine 1701–isoleucine 1721 is disordered. Residues threonine 1726 to methionine 1801 enclose the Carrier domain. An O-(pantetheine 4'-phosphoryl)serine modification is found at serine 1761. Residues leucine 1783 to asparagine 1803 are required for catalytic activity.

As to quaternary structure, homotetramer.

It catalyses the reaction 3 malonyl-CoA + acetyl-CoA + NADPH + 3 H(+) = 6-methylsalicylate + 3 CO2 + NADP(+) + 4 CoA + H2O. Its pathway is secondary metabolite biosynthesis. In terms of biological role, 6-methylsalicylic acid synthase; part of the gene cluster that mediates the biosynthesis of terreic acid, a quinone epoxide inhibitor of Bruton's tyrosine kinase. The first step of the pathway is the synthesis of 6-methylsalicylic acid (6-MSA) by the 6-methylsalicylic acid synthase atX. In the biosynthesis of 6-MSA, atX utilizes one acetyl-CoA and three malonyl-CoAs as its substrates and catalyzes a series of programmed reactions including Claisen condensation, reduction, aldol cyclization, and the hydrolytic cleavage that yields 6-MSA. The 6-methylsalicylate 1-monooxygenase atA then catalyzes the decarboxylative hydroxylation of 6-MSA to 3-methylcatechol. The next step is the conversion of 3-methylcatechol to 3-methyl-1,2,4-benzenetriol by cytochrome P450 monooxygenase atE, which is enhanced by cytochrome P450 monooxygenase atG. Then, the epoxidase atD catalyzes the epoxidation and hydroxyl oxidation of 3-methyl-1,2,4-benzenetriol to terremutin. Lastly, GMC oxidoreductase atC oxidizes terremutin to terreic acid. In Aspergillus terreus (strain NIH 2624 / FGSC A1156), this protein is 6-methylsalicylic acid synthase.